Here is a 576-residue protein sequence, read N- to C-terminus: 9-cis-epoxycarotenoid dioxygenase NCED2, chloroplastic (576 aa).

A chloroplast-targeting transit peptide spans 1–34 (MEVPIAAMTFAHPANVMTLASRQPKSKRSHISPA). 4 residues coordinate Fe cation: His-270, His-319, His-385, and His-563.

The protein belongs to the carotenoid oxygenase family. Requires Fe(2+) as cofactor.

The protein localises to the plastid. It localises to the chloroplast. The enzyme catalyses a 9-cis-epoxycarotenoid + O2 = a 12'-apo-carotenal + 2-cis,4-trans-xanthoxin. It catalyses the reaction 9-cis-violaxanthin + O2 = (3S,5R,6S)-5,6-epoxy-3-hydroxy-5,6-dihydro-12'-apo-beta-caroten-12'-al + 2-cis,4-trans-xanthoxin. It carries out the reaction 9'-cis-neoxanthin + O2 = (3S,5R,6R)-3,5-dihydroxy-6,7-didehydro-5,6-dihydro-12'-apo-beta-caroten-12'-al + 2-cis,4-trans-xanthoxin. Its function is as follows. Has a 11,12(11',12') 9-cis epoxycarotenoid cleavage activity. Catalyzes the first step of abscisic-acid biosynthesis from carotenoids. The sequence is that of 9-cis-epoxycarotenoid dioxygenase NCED2, chloroplastic from Oryza sativa subsp. japonica (Rice).